Here is a 584-residue protein sequence, read N- to C-terminus: Arginine--tRNA ligase (584 aa).

Residues 126-136 (PNIAKEMHVGH) carry the 'HIGH' region motif.

The protein belongs to the class-I aminoacyl-tRNA synthetase family. Monomer.

It localises to the cytoplasm. It catalyses the reaction tRNA(Arg) + L-arginine + ATP = L-arginyl-tRNA(Arg) + AMP + diphosphate. The sequence is that of Arginine--tRNA ligase (argS) from Synechocystis sp. (strain ATCC 27184 / PCC 6803 / Kazusa).